Consider the following 440-residue polypeptide: Ribosomal protein uS12 methylthiotransferase RimO (440 aa).

The region spanning 1-117 (MKVHLTSLGC…VIEAVAGKES (117 aa)) is the MTTase N-terminal domain. 6 residues coordinate [4Fe-4S] cluster: cysteine 10, cysteine 46, cysteine 80, cysteine 155, cysteine 159, and cysteine 162. Positions 141–371 (CATPHTVYVK…MTAQIDISSR (231 aa)) constitute a Radical SAM core domain. The region spanning 374–440 (AKRVGSREPV…SAYDLTGEAQ (67 aa)) is the TRAM domain.

It belongs to the methylthiotransferase family. RimO subfamily. The cofactor is [4Fe-4S] cluster.

It localises to the cytoplasm. The catalysed reaction is L-aspartate(89)-[ribosomal protein uS12]-hydrogen + (sulfur carrier)-SH + AH2 + 2 S-adenosyl-L-methionine = 3-methylsulfanyl-L-aspartate(89)-[ribosomal protein uS12]-hydrogen + (sulfur carrier)-H + 5'-deoxyadenosine + L-methionine + A + S-adenosyl-L-homocysteine + 2 H(+). Functionally, catalyzes the methylthiolation of an aspartic acid residue of ribosomal protein uS12. The polypeptide is Ribosomal protein uS12 methylthiotransferase RimO (Desulfosudis oleivorans (strain DSM 6200 / JCM 39069 / Hxd3) (Desulfococcus oleovorans)).